The chain runs to 228 residues: Glutamate transport system permease protein GluC (228 aa).

5 helical membrane passes run 16 to 36 (FWVT…FGTI), 64 to 84 (LTLV…LTLA), 100 to 120 (AVLG…RSGI), 145 to 165 (IIFP…LIAL), and 195 to 215 (LFVV…PMGL). The 202-residue stretch at 16 to 217 (FWVTIKLTIY…ILTLPMGLGL (202 aa)) folds into the ABC transmembrane type-1 domain.

The protein belongs to the binding-protein-dependent transport system permease family. HisMQ subfamily. As to quaternary structure, the complex is composed of two ATP-binding proteins (GluA), two transmembrane proteins (GluC and GluD) and a solute-binding protein (GluB).

The protein resides in the cell membrane. Part of the ABC transporter complex GluABCD involved in glutamate uptake. Probably responsible for the translocation of the substrate across the membrane. The chain is Glutamate transport system permease protein GluC from Corynebacterium glutamicum (strain ATCC 13032 / DSM 20300 / JCM 1318 / BCRC 11384 / CCUG 27702 / LMG 3730 / NBRC 12168 / NCIMB 10025 / NRRL B-2784 / 534).